Consider the following 188-residue polypeptide: FUN14 domain-containing protein 1B (188 aa).

The chain crosses the membrane as a helical span at residues Val21–Phe41. The YXXL motif lies at Tyr52 to Leu55. The next 3 membrane-spanning stretches (helical) occupy residues Tyr82–Phe102, Ala109–Ile129, and Phe167–Ala187.

This sequence belongs to the FUN14 family.

It is found in the mitochondrion outer membrane. Functionally, acts as an activator of hypoxia-induced mitophagy, an important mechanism for mitochondrial quality control. The chain is FUN14 domain-containing protein 1B (fundc1-b) from Xenopus laevis (African clawed frog).